The primary structure comprises 267 residues: tRNA pseudouridine synthase A (267 aa).

D55 functions as the Nucleophile in the catalytic mechanism. Residue Y109 participates in substrate binding.

Belongs to the tRNA pseudouridine synthase TruA family.

It catalyses the reaction uridine(38/39/40) in tRNA = pseudouridine(38/39/40) in tRNA. Functionally, formation of pseudouridine at positions 38, 39 and 40 in the anticodon stem and loop of transfer RNAs. The chain is tRNA pseudouridine synthase A from Natronomonas pharaonis (strain ATCC 35678 / DSM 2160 / CIP 103997 / JCM 8858 / NBRC 14720 / NCIMB 2260 / Gabara) (Halobacterium pharaonis).